We begin with the raw amino-acid sequence, 405 residues long: Tryptophan synthase beta chain (405 aa).

Lysine 98 carries the post-translational modification N6-(pyridoxal phosphate)lysine.

The protein belongs to the TrpB family. As to quaternary structure, tetramer of two alpha and two beta chains. It depends on pyridoxal 5'-phosphate as a cofactor.

The catalysed reaction is (1S,2R)-1-C-(indol-3-yl)glycerol 3-phosphate + L-serine = D-glyceraldehyde 3-phosphate + L-tryptophan + H2O. It participates in amino-acid biosynthesis; L-tryptophan biosynthesis; L-tryptophan from chorismate: step 5/5. The beta subunit is responsible for the synthesis of L-tryptophan from indole and L-serine. This Xanthomonas axonopodis pv. citri (strain 306) protein is Tryptophan synthase beta chain.